The primary structure comprises 411 residues: F-box protein At4g19940 (411 aa).

In terms of domain architecture, F-box spans 29–75; it reads RQPIPEIPFDLVIEILTRLPAKSLMRFKSVSKLWSSLICSRNFTNRL.

This chain is F-box protein At4g19940, found in Arabidopsis thaliana (Mouse-ear cress).